The primary structure comprises 358 residues: Peptide chain release factor 1 (358 aa).

Gln233 carries the post-translational modification N5-methylglutamine.

Belongs to the prokaryotic/mitochondrial release factor family. Post-translationally, methylated by PrmC. Methylation increases the termination efficiency of RF1.

Its subcellular location is the cytoplasm. Its function is as follows. Peptide chain release factor 1 directs the termination of translation in response to the peptide chain termination codons UAG and UAA. The chain is Peptide chain release factor 1 from Staphylococcus saprophyticus subsp. saprophyticus (strain ATCC 15305 / DSM 20229 / NCIMB 8711 / NCTC 7292 / S-41).